The following is a 168-amino-acid chain: Iron-sulfur cluster assembly enzyme ISCU (168 aa).

The transit peptide at 1–35 (MAAATGAGRLRRAASALLLRSPRLPARELSAPARL) directs the protein to the mitochondrion. Phosphoserine is present on Ser-15. The active-site Cysteine persulfide intermediate is Cys-70. A Cysteine persulfide modification is found at Cys-70. The Zn(2+) site is built by Asp-72, Cys-96, and Cys-139. Cys-139 functions as the Cysteine persulfide intermediate in the catalytic mechanism. The residue at position 139 (Cys-139) is a Cysteine persulfide.

Belongs to the NifU family. In terms of assembly, homodimer; Tyr-36-mediated dimerization of two iron- and sulfide-containing ISCU subunit bind to the cysteine desulfurase complex. Component of the mitochondrial core iron-sulfur cluster (ISC) complex composed of NFS1, LYRM4, NDUFAB1, ISCU, FXN, and FDX2; this complex is a heterohexamer containing two copies of each monomer. Interacts (D-state) with NFS1 (homodimer form); each monomer interacts with the C-terminal regions of each NFS1 monomer. Interacts (monomer form) with FXN (via ferrous form); the interaction is possible when both are bound to the dimeric form of the cysteine desulfurase complex (NFS1:LYRM4) and enhances FXN interaction to the dimeric form of the cysteine desulfurase complex (NFS1:LYRM4). Interacts with GLRX5. Interacts (D-state) with HSPA9. Interacts (S-state) with HSCB; this interaction stimulates the ATPase activity of HSPA9. Component of a complex composed of FXN, NFS1, LYRM4 and ISCU. Post-translationally, cysteine persulfide is reduced by thiol-containing molecules such as glutathione and L-cysteine. Phosphorylation at Ser-15 is required for ISCU protein stabilization in the cytosol, whereas dephosphorylation of Ser-15, due to the inhibition of mTORC1 (mammalian target of rapamycin complex 1) complex, leads to degradation of the precursor form and ultimately to a decrease in the mitochondrial mature form.

The protein localises to the mitochondrion. Functionally, mitochondrial scaffold protein, of the core iron-sulfur cluster (ISC) assembly complex, that provides the structural architecture on which the [2Fe-2S] clusters are assembled. The core iron-sulfur cluster (ISC) assembly complex is involved in the de novo synthesis of a [2Fe-2S] cluster, the first step of the mitochondrial iron-sulfur protein biogenesis. This process is initiated by the cysteine desulfurase complex (NFS1:LYRM4:NDUFAB1) that produces persulfide which is delivered on the scaffold protein ISCU in a FXN-dependent manner. Then this complex is stabilized by FDX2 which provides reducing equivalents to accomplish the [2Fe-2S] cluster assembly. Finally, the [2Fe-2S] cluster is transferred from ISCU to chaperone proteins, including HSCB, HSPA9 and GLRX5. Exists as two slow interchanging conformational states, a structured (S) and disordered (D) form. May modulate NFS1 desulfurase activity in a zinc-dependent manner. Modulates the interaction between FXN and the cysteine desulfurase complex. The polypeptide is Iron-sulfur cluster assembly enzyme ISCU (Mus musculus (Mouse)).